The chain runs to 101 residues: Aspartyl/glutamyl-tRNA(Asn/Gln) amidotransferase subunit C (101 aa).

This sequence belongs to the GatC family. In terms of assembly, heterotrimer of A, B and C subunits.

It catalyses the reaction L-glutamyl-tRNA(Gln) + L-glutamine + ATP + H2O = L-glutaminyl-tRNA(Gln) + L-glutamate + ADP + phosphate + H(+). The catalysed reaction is L-aspartyl-tRNA(Asn) + L-glutamine + ATP + H2O = L-asparaginyl-tRNA(Asn) + L-glutamate + ADP + phosphate + 2 H(+). Its function is as follows. Allows the formation of correctly charged Asn-tRNA(Asn) or Gln-tRNA(Gln) through the transamidation of misacylated Asp-tRNA(Asn) or Glu-tRNA(Gln) in organisms which lack either or both of asparaginyl-tRNA or glutaminyl-tRNA synthetases. The reaction takes place in the presence of glutamine and ATP through an activated phospho-Asp-tRNA(Asn) or phospho-Glu-tRNA(Gln). The sequence is that of Aspartyl/glutamyl-tRNA(Asn/Gln) amidotransferase subunit C from Lactococcus lactis subsp. cremoris (strain SK11).